The sequence spans 249 residues: Triosephosphate isomerase (249 aa).

9–11 is a binding site for substrate; the sequence is NWK. Catalysis depends on His94, which acts as the Electrophile. Glu166 (proton acceptor) is an active-site residue. Residues Gly172, Ser211, and 232–233 contribute to the substrate site; that span reads GG.

The protein belongs to the triosephosphate isomerase family. In terms of assembly, homodimer.

It localises to the cytoplasm. The catalysed reaction is D-glyceraldehyde 3-phosphate = dihydroxyacetone phosphate. Its pathway is carbohydrate biosynthesis; gluconeogenesis. It participates in carbohydrate degradation; glycolysis; D-glyceraldehyde 3-phosphate from glycerone phosphate: step 1/1. Functionally, involved in the gluconeogenesis. Catalyzes stereospecifically the conversion of dihydroxyacetone phosphate (DHAP) to D-glyceraldehyde-3-phosphate (G3P). This Dechloromonas aromatica (strain RCB) protein is Triosephosphate isomerase.